We begin with the raw amino-acid sequence, 2575 residues long: Non-reducing polyketide synthase pks11 (2575 aa).

The 140-residue stretch at 89 to 228 (LANIILSPLV…ASKTVSTLQG (140 aa)) folds into the Starter acyltransferase (SAT) domain. Residue cysteine 129 is the Nucleophile; for transacylase activity of the active site. The active-site Proton donor/acceptor; for transacylase activity is the histidine 247. In terms of domain architecture, Ketosynthase family 3 (KS3) spans 373–790 (EDDIAVVGMS…GSNASAVVTE (418 aa)). Active-site for beta-ketoacyl synthase activity residues include cysteine 538, histidine 673, and histidine 713. Residues 901 to 1192 (FGGQISTYVG…TNMASRALGS (292 aa)) form the Malonyl-CoA:ACP transacylase (MAT) domain. The interval 1276 to 1409 (PKGLWSFIDY…GQIIFVSTDN (134 aa)) is N-terminal hotdog fold. The 311-residue stretch at 1276–1586 (PKGLWSFIDY…YHKVAKATMS (311 aa)) folds into the PKS/mFAS DH domain. The tract at residues 1307 to 1584 (LVSGHIIAQT…VNYHKVAKAT (278 aa)) is product template (PT) domain. Histidine 1311 functions as the Proton acceptor; for dehydratase activity in the catalytic mechanism. The tract at residues 1437–1586 (ADDIIQGRNI…YHKVAKATMS (150 aa)) is C-terminal hotdog fold. Residue aspartate 1493 is the Proton donor; for dehydratase activity of the active site. Over residues 1597–1606 (TTSTSTNVKS) the composition is skewed to polar residues. The interval 1597–1636 (TTSTSTNVKSSPAAAEGSSPVENGASGSGSKAKKTKSGAG) is disordered. Positions 1637-1711 (QDVVNKTKGL…GLVQIIKSTL (75 aa)) constitute a Carrier domain. Position 1671 is an O-(pantetheine 4'-phosphoryl)serine (serine 1671). A disordered region spans residues 1713–1762 (VSDDEEGSDQEGSEASSSESSTTFTPSTTATTVSDVEDNGNEKSIGKEKS). Residues 1714–1724 (SDDEEGSDQEG) show a composition bias toward acidic residues. A compositionally biased stretch (low complexity) spans 1725–1746 (SEASSSESSTTFTPSTTATTVS). Positions 1752–1762 (GNEKSIGKEKS) are enriched in basic and acidic residues. The segment at 1835-2130 (LTRIPHDPQH…HIDWTDGNSP (296 aa)) is methyltransferase domain. The region spanning 2204–2448 (ITGATGSLGS…LCWTPVDDVA (245 aa)) is the Thioester reductase (TE) domain.

Pantetheine 4'-phosphate serves as cofactor.

The protein operates within secondary metabolite biosynthesis. In terms of biological role, non-reducing polyketide synthase; part of the gene cluster that mediates the biosynthesis of mitorubrinol and mitorubrinic acid, two virulence factors that improve T.marneffei intracellular survival in macrophages. The two polyketide synthases pks12 and pks11 are probably responsible for sequential use in the biosynthesis of mitorubrinol and mitorubrinic acid. The first part of the biosynthesis is probably catalyzed by pks12, which synthesized orsellinic acid. This tetraketide is then used as a starter unit for pks11, which possesses a SAT domain, in the second part of the biosynthesis. Pks11, contains a methyltransferase domain, also served that methylates the products, using a methyl group from S-adenosylmethionine. The polypeptide is Non-reducing polyketide synthase pks11 (Talaromyces marneffei (Penicillium marneffei)).